Here is a 142-residue protein sequence, read N- to C-terminus: Malate dehydrogenase, mitochondrial (142 aa).

NAD(+) contacts are provided by residues 1–6 (ASGGIG) and D26. Residues R73 and R79 each coordinate substrate. Residues N86 and 109-111 (ITN) each bind NAD(+). Residue N111 participates in substrate binding.

This sequence belongs to the LDH/MDH superfamily. MDH type 1 family. In terms of assembly, homodimer.

It localises to the mitochondrion matrix. It carries out the reaction (S)-malate + NAD(+) = oxaloacetate + NADH + H(+). The sequence is that of Malate dehydrogenase, mitochondrial from Schistosoma mansoni (Blood fluke).